An 83-amino-acid chain; its full sequence is Small ribosomal subunit protein eS21 (83 aa).

This sequence belongs to the eukaryotic ribosomal protein eS21 family. In terms of assembly, component of the 40S small ribosomal subunit. Interacts with sta.

The protein localises to the cytoplasm. The protein resides in the cytosol. It is found in the rough endoplasmic reticulum. In terms of biological role, may be an associated component of the ribosome rather than a core structural subunit. May act as a translation initiation factor. Has a role in regulation of cell proliferation in the hematopoietic organs and the imaginal disks of larva. The polypeptide is Small ribosomal subunit protein eS21 (RpS21) (Drosophila erecta (Fruit fly)).